We begin with the raw amino-acid sequence, 475 residues long: UDP-glycosyltransferase 708A6 (475 aa).

Residues Ser286, 348 to 349 (WV), 366 to 374 (HCGWNSLTE), and 388 to 391 (FGDQ) each bind UDP-alpha-D-glucose.

The protein belongs to the UDP-glycosyltransferase family. In terms of tissue distribution, expressed in radicles, hypocotyls and juvenile leaves. Expressed at low levels in roots.

Bifunctional glycosyltransferase that can produce both C- and O-glycosidated flavonoids. Converts 2-hydroxynaringenin to isovitexin. Converts eriodictyol to orientin and isoorientin. Converts naringenin and eriodictyol to naringenin 7-O-glucoside and eriodictyol 7-O-glucoside, respectively. The sequence is that of UDP-glycosyltransferase 708A6 from Zea mays (Maize).